We begin with the raw amino-acid sequence, 519 residues long: Glutamate--cysteine ligase (519 aa).

It belongs to the glutamate--cysteine ligase type 1 family. Type 1 subfamily.

The catalysed reaction is L-cysteine + L-glutamate + ATP = gamma-L-glutamyl-L-cysteine + ADP + phosphate + H(+). It participates in sulfur metabolism; glutathione biosynthesis; glutathione from L-cysteine and L-glutamate: step 1/2. This chain is Glutamate--cysteine ligase, found in Yersinia pseudotuberculosis serotype I (strain IP32953).